We begin with the raw amino-acid sequence, 219 residues long: Small ribosomal subunit protein uS3c (219 aa).

The KH type-2 domain occupies 47-119; sequence VRKYVRTAEN…KFIISLAEVE (73 aa).

The protein belongs to the universal ribosomal protein uS3 family. As to quaternary structure, part of the 30S ribosomal subunit.

It is found in the plastid. Its subcellular location is the chloroplast. The polypeptide is Small ribosomal subunit protein uS3c (rps3) (Staurastrum punctulatum (Green alga)).